A 256-amino-acid polypeptide reads, in one-letter code: MISAQNLVYSLQGRRLTDNVSLTFPGGEIVAILGPNGAGKSTLLRQLTGYLQPDSGECRLFNKPLNEWSITELAKHRAVMRQNSHMAFPFSVQEVIQMGRHPHRTGNQDNETAQIMALCDCQALANRDYRQLSGGEQQRVQLARLLVQLWEPTPSPKWLFLDEPTSALDIHHQQHLFRLLRQLVHERQFNVCCVLHDLNLAARYADRIVLMQKGKVIANGKPQDVLTQQALTMLYGADITVLEDPANHSPLIVLDH.

The ABC transporter domain occupies 2-238; the sequence is ISAQNLVYSL…QALTMLYGAD (237 aa). 34–41 is an ATP binding site; sequence GPNGAGKS.

The protein belongs to the ABC transporter superfamily. Heme (hemin) importer (TC 3.A.1.14.5) family. The complex is composed of two ATP-binding proteins (HmuV), two transmembrane proteins (HmuU) and a solute-binding protein (HmuT).

It localises to the cell inner membrane. In terms of biological role, part of the ABC transporter complex HmuTUV involved in hemin import. Responsible for energy coupling to the transport system. In Shigella dysenteriae serotype 1 (strain Sd197), this protein is Hemin import ATP-binding protein HmuV.